Reading from the N-terminus, the 247-residue chain is 2-amino-5-formylamino-6-ribosylaminopyrimidin-4(3H)-one 5'-monophosphate deformylase (247 aa).

E41, H43, D52, and H121 together coordinate Fe cation.

It belongs to the creatininase superfamily. FAPy deformylase family. Homodimer. Fe(2+) serves as cofactor. Requires Zn(2+) as cofactor.

The enzyme catalyses 2-amino-5-formylamino-6-(5-phospho-D-ribosylamino)pyrimidin-4(3H)-one + H2O = 2,5-diamino-6-(1-D-ribosylamino)pyrimidin-4(3H)-one 5'-phosphate + formate + H(+). The protein operates within cofactor biosynthesis; coenzyme F420 biosynthesis. It participates in cofactor biosynthesis; riboflavin biosynthesis. Its function is as follows. Catalyzes the hydrolysis of the formamide of 2-amino-5-formylamino-6-ribosylamino-4(3H)-pyrimidinone 5'-monophosphate (FAPy) to form 2,5-diamino-6-ribosylamino-4(3H)-pyrimidinone 5'-phosphate (APy). In Methanothermus fervidus (strain ATCC 43054 / DSM 2088 / JCM 10308 / V24 S), this protein is 2-amino-5-formylamino-6-ribosylaminopyrimidin-4(3H)-one 5'-monophosphate deformylase.